The sequence spans 1106 residues: Platelet-derived growth factor receptor beta (1106 aa).

An N-terminal signal peptide occupies residues methionine 1–glycine 32. Ig-like C2-type domains are found at residues leucine 33 to valine 120, proline 129 to glutamine 210, isoleucine 214 to threonine 309, histidine 331 to alanine 403, and proline 416 to valine 524. Topologically, residues leucine 33 to valine 532 are extracellular. Asparagine 45, asparagine 89, and asparagine 103 each carry an N-linked (GlcNAc...) asparagine glycan. A disulfide bridge links cysteine 54 with cysteine 100. The cysteines at positions 149 and 190 are disulfide-linked. Residues asparagine 215 and asparagine 230 are each glycosylated (N-linked (GlcNAc...) asparagine). Cysteine 235 and cysteine 291 form a disulfide bridge. 6 N-linked (GlcNAc...) asparagine glycosylation sites follow: asparagine 292, asparagine 307, asparagine 354, asparagine 371, asparagine 468, and asparagine 479. An intrachain disulfide couples cysteine 436 to cysteine 508. The helical transmembrane segment at valine 533–isoleucine 553 threads the bilayer. Over methionine 554 to leucine 1106 the chain is Cytoplasmic. Phosphotyrosine; by autocatalysis occurs at positions 562, 579, and 581. Residues leucine 600–leucine 962 form the Protein kinase domain. ATP is bound by residues leucine 606–valine 614 and lysine 634. Tyrosine 686 is subject to Phosphotyrosine; by ABL1 and ABL2. A phosphotyrosine; by autocatalysis mark is found at tyrosine 716, tyrosine 740, tyrosine 751, tyrosine 763, tyrosine 771, tyrosine 775, and tyrosine 778. Residue aspartate 826 is the Proton acceptor of the active site. Position 857 is a phosphotyrosine; by autocatalysis (tyrosine 857). A phosphotyrosine; by ABL1 and ABL2 mark is found at tyrosine 934 and tyrosine 970. Phosphotyrosine; by autocatalysis occurs at positions 1009 and 1021. Positions asparagine 1019 to leucine 1106 are disordered. Polar residues predominate over residues serine 1043 to cysteine 1060. A compositionally biased stretch (acidic residues) spans proline 1066–glutamine 1088.

It belongs to the protein kinase superfamily. Tyr protein kinase family. CSF-1/PDGF receptor subfamily. As to quaternary structure, interacts with homodimeric PDGFB and PDGFD, and with heterodimers formed by PDGFA and PDGFB. May also interact with homodimeric PDGFC. Monomer in the absence of bound ligand. Interaction with homodimeric PDGFB, heterodimers formed by PDGFA and PDGFB or homodimeric PDGFD, leads to receptor dimerization, where both PDGFRA homodimers and heterodimers with PDGFRB are observed. Interacts with SH2B2/APS. Interacts directly (tyrosine phosphorylated) with SHB. Interacts (tyrosine phosphorylated) with PIK3R1 and RASA1. Interacts (tyrosine phosphorylated) with CBL. Interacts (tyrosine phosphorylated) with SRC and SRC family kinases. Interacts (tyrosine phosphorylated) with PIK3C2B, maybe indirectly. Interacts (tyrosine phosphorylated) with SHC1, GRB7, GRB10 and NCK1. Interaction with GRB2 is mediated by SHC1. Interacts (via C-terminus) with NHERF1. In terms of processing, autophosphorylated on tyrosine residues upon ligand binding. Autophosphorylation occurs in trans, i.e. one subunit of the dimeric receptor phosphorylates tyrosine residues on the other subunit. Phosphorylation at Tyr-579, and to a lesser degree, at Tyr-581, is important for interaction with SRC family kinases. Phosphorylation at Tyr-740 and Tyr-751 is important for interaction with PIK3R1. Phosphorylation at Tyr-751 is important for interaction with NCK1. Phosphorylation at Tyr-771 and Tyr-857 is important for interaction with RASA1/GAP. Phosphorylation at Tyr-857 is important for efficient phosphorylation of PLCG1 and PTPN11, resulting in increased phosphorylation of AKT1, MAPK1/ERK2 and/or MAPK3/ERK1, PDCD6IP/ALIX and STAM, and in increased cell proliferation. Phosphorylation at Tyr-1009 is important for interaction with PTPN11. Phosphorylation at Tyr-1009 and Tyr-1021 is important for interaction with PLCG1. Phosphorylation at Tyr-1021 is important for interaction with CBL; PLCG1 and CBL compete for the same binding site. Dephosphorylated by PTPRJ at Tyr-751, Tyr-857, Tyr-1009 and Tyr-1021. Dephosphorylated by PTPN2 at Tyr-579 and Tyr-1021. Post-translationally, N-glycosylated. Ubiquitinated. After autophosphorylation, the receptor is polyubiquitinated, leading to its degradation.

It is found in the cell membrane. It localises to the cytoplasmic vesicle. The protein resides in the lysosome lumen. The catalysed reaction is L-tyrosyl-[protein] + ATP = O-phospho-L-tyrosyl-[protein] + ADP + H(+). With respect to regulation, present in an inactive conformation in the absence of bound ligand. Binding of PDGFB and/or PDGFD leads to dimerization and activation by autophosphorylation on tyrosine residues. Inhibited by imatinib. Functionally, tyrosine-protein kinase that acts as a cell-surface receptor for homodimeric PDGFB and PDGFD and for heterodimers formed by PDGFA and PDGFB, and plays an essential role in the regulation of embryonic development, cell proliferation, survival, differentiation, chemotaxis and migration. Plays an essential role in blood vessel development by promoting proliferation, migration and recruitment of pericytes and smooth muscle cells to endothelial cells. Plays a role in the migration of vascular smooth muscle cells and the formation of neointima at vascular injury sites. Required for normal development of the cardiovascular system. Required for normal recruitment of pericytes (mesangial cells) in the kidney glomerulus, and for normal formation of a branched network of capillaries in kidney glomeruli. Promotes rearrangement of the actin cytoskeleton and the formation of membrane ruffles. Binding of its cognate ligands - homodimeric PDGFB, heterodimers formed by PDGFA and PDGFB or homodimeric PDGFD -leads to the activation of several signaling cascades; the response depends on the nature of the bound ligand and is modulated by the formation of heterodimers between PDGFRA and PDGFRB. Phosphorylates PLCG1, PIK3R1, PTPN11, RASA1/GAP, CBL, SHC1 and NCK1. Activation of PLCG1 leads to the production of the cellular signaling molecules diacylglycerol and inositol 1,4,5-trisphosphate, mobilization of cytosolic Ca(2+) and the activation of protein kinase C. Phosphorylation of PIK3R1, the regulatory subunit of phosphatidylinositol 3-kinase, leads to the activation of the AKT1 signaling pathway. Phosphorylation of SHC1, or of the C-terminus of PTPN11, creates a binding site for GRB2, resulting in the activation of HRAS, RAF1 and down-stream MAP kinases, including MAPK1/ERK2 and/or MAPK3/ERK1. Promotes phosphorylation and activation of SRC family kinases. Promotes phosphorylation of PDCD6IP/ALIX and STAM. Receptor signaling is down-regulated by protein phosphatases that dephosphorylate the receptor and its down-stream effectors, and by rapid internalization of the activated receptor. The protein is Platelet-derived growth factor receptor beta (PDGFRB) of Homo sapiens (Human).